The primary structure comprises 364 residues: Paraneoplastic antigen Ma2 homolog (364 aa).

A2 carries the post-translational modification N-acetylalanine. The segment covering 335-351 has biased composition (acidic residues); sequence EEEEATFENENTEEPEG. The interval 335 to 364 is disordered; that stretch reads EEEEATFENENTEEPEGGDGYGHWGNEAND.

The protein belongs to the PNMA family.

It localises to the nucleus. The protein localises to the nucleolus. The polypeptide is Paraneoplastic antigen Ma2 homolog (PNMA2) (Bos taurus (Bovine)).